Reading from the N-terminus, the 80-residue chain is Protein transport protein SSS1 (80 aa).

The Cytoplasmic portion of the chain corresponds to Met1–Glu46. The chain crosses the membrane as a helical span at residues Tyr47–Ile75. Topologically, residues Arg76–Val80 are extracellular.

Belongs to the SecE/SEC61-gamma family. As to quaternary structure, component of the heterotrimeric Sec61 complex, which is composed of SSH1, SBH1 and SSS1. Presumably three to four Sec61 heterotrimers assemble into an oligomeric ring with a central aqueous pore. In cotranslational ER import, the pore diameter varies from 9-15 A in a ribosome-free resting state to 40-60 A in a functional state when associated with the ribosome. The Sec61 complex is part of a channel-forming translocon complex whose composition seem to change dependent upon different functional states. During post-translational ER import the Sec61 complex associates with the Sec62/63 complex to form the Sec complex. SSH1 is a component of the heterotrimeric Ssh1 complex, which is composed of SSH1, SBH2 and SSS1. SSS1 interacts with OST1, OST4, SWP1 and WBP1, components of the OT complex.

Its subcellular location is the endoplasmic reticulum membrane. Functionally, part of the Sec61 complex, which is the major component of channel-forming translocon complex that mediates protein translocation across the endoplasmic reticulum (ER). The functional states of the translocon complex include co- and post-translational ER import, cotranslational membrane protein integration and retrograde transport of misfolded proteins out of the ER. In the cotranslational pathway, ribosomes synthesizing presecretory proteins are targeted to the translocon by the cytosolic signal recognition particle (SRP) and its ER-localized receptor. The association of the Sec61 complex with the ribosome is mediated by the 28S rRNA of the large ribosomal subunit. SRP-independent post-translational translocation requires the association of additional factors, such as the Sec62/63 complex and KAR2. Also part of the Ssh1 complex, which probably is the major component of a channel-forming translocon complex that may function exclusively in the cotranslational pathway of protein ER import. The polypeptide is Protein transport protein SSS1 (SSS1) (Saccharomyces cerevisiae (strain ATCC 204508 / S288c) (Baker's yeast)).